We begin with the raw amino-acid sequence, 145 residues long: Snaclec salmorin subunit B (145 aa).

The N-terminal stretch at 1 to 23 (MGRFIFVSFGLLVVFVSLSGTGA) is a signal peptide. Cystine bridges form between Cys-25–Cys-36, Cys-53–Cys-141, and Cys-118–Cys-133. The C-type lectin domain occupies 32–142 (YEGHCYKLFN…CRMEAYFVCE (111 aa)). Ca(2+) contacts are provided by Ser-64 and Glu-70. Glu-142 provides a ligand contact to Ca(2+).

Belongs to the snaclec family. Heterodimer of subunits A and B; disulfide-linked. In terms of tissue distribution, expressed by the venom gland.

The protein resides in the secreted. Inhibits thrombin-induced fibrinogen clotting and factor Xa-induced prothrombin activation. Binds to thrombin and prothrombin exosites. This chain is Snaclec salmorin subunit B, found in Gloydius brevicauda (Korean slamosa snake).